Consider the following 304-residue polypeptide: Oxygen-dependent coproporphyrinogen-III oxidase (304 aa).

Position 94 (S94) interacts with substrate. Positions 98 and 108 each coordinate a divalent metal cation. The active-site Proton donor is H108. 110–112 serves as a coordination point for substrate; it reads NVR. A divalent metal cation-binding residues include H147 and H177. An important for dimerization region spans residues 242-277; it reads YVEFNLVYDRGTLFGLQSGGRTESILMSLPPVAHWR. 260–262 is a binding site for substrate; it reads GGR.

It belongs to the aerobic coproporphyrinogen-III oxidase family. In terms of assembly, homodimer. The cofactor is a divalent metal cation.

The protein localises to the cytoplasm. The catalysed reaction is coproporphyrinogen III + O2 + 2 H(+) = protoporphyrinogen IX + 2 CO2 + 2 H2O. It participates in porphyrin-containing compound metabolism; protoporphyrin-IX biosynthesis; protoporphyrinogen-IX from coproporphyrinogen-III (O2 route): step 1/1. Involved in the heme biosynthesis. Catalyzes the aerobic oxidative decarboxylation of propionate groups of rings A and B of coproporphyrinogen-III to yield the vinyl groups in protoporphyrinogen-IX. In Methylococcus capsulatus (strain ATCC 33009 / NCIMB 11132 / Bath), this protein is Oxygen-dependent coproporphyrinogen-III oxidase.